Consider the following 600-residue polypeptide: Malto-oligosyltrehalose trehalohydrolase (600 aa).

The tract at residues 1-34 is disordered; sequence MTQTQPVTPTPPASFQTQHDPRTRLGATPLPGGA. 273-278 contributes to the substrate binding site; that stretch reads RLDATP. Catalysis depends on D275, which acts as the Nucleophile. E308 acts as the Proton donor in catalysis. Residues 328 to 332, E376, and 399 to 404 contribute to the substrate site; these read DDFHH and HDQIGN.

It belongs to the glycosyl hydrolase 13 family. As to quaternary structure, monomer.

Its subcellular location is the cytoplasm. It catalyses the reaction hydrolysis of (1-&gt;4)-alpha-D-glucosidic linkage in 4-alpha-D-[(1-&gt;4)-alpha-D-glucanosyl]n trehalose to yield trehalose and (1-&gt;4)-alpha-D-glucan.. The protein operates within glycan biosynthesis; trehalose biosynthesis. In Deinococcus radiodurans (strain ATCC 13939 / DSM 20539 / JCM 16871 / CCUG 27074 / LMG 4051 / NBRC 15346 / NCIMB 9279 / VKM B-1422 / R1), this protein is Malto-oligosyltrehalose trehalohydrolase (treZ).